The chain runs to 143 residues: Hemoglobin subunit alpha (143 aa).

The residue at position 2 (serine 2) is an N-acetylserine. Positions 2 to 143 (SLSDKDKSAV…VALALAEKYR (142 aa)) constitute a Globin domain. Histidine 60 provides a ligand contact to O2. Histidine 89 is a heme b binding site.

It belongs to the globin family. As to quaternary structure, heterotetramer of two alpha chains and two beta chains. Red blood cells.

In terms of biological role, involved in oxygen transport from gills to the various peripheral tissues. The sequence is that of Hemoglobin subunit alpha (hba) from Pogonophryne scotti (Saddleback plunderfish).